A 308-amino-acid polypeptide reads, in one-letter code: D-alanine--D-alanine ligase (308 aa).

Residues 108 to 303 (KLVWKAAGLP…YEALCLKVLE (196 aa)) enclose the ATP-grasp domain. Residue 134-189 (EAELGLPMFVKPACEGSSLGVTKVRKAGELAQAYAEARKFDPLVLAEQFVGGGEYT) coordinates ATP. The Mg(2+) site is built by D257, E270, and N272.

Belongs to the D-alanine--D-alanine ligase family. It depends on Mg(2+) as a cofactor. The cofactor is Mn(2+).

The protein localises to the cytoplasm. The enzyme catalyses 2 D-alanine + ATP = D-alanyl-D-alanine + ADP + phosphate + H(+). Its pathway is cell wall biogenesis; peptidoglycan biosynthesis. Functionally, cell wall formation. In Laribacter hongkongensis (strain HLHK9), this protein is D-alanine--D-alanine ligase.